We begin with the raw amino-acid sequence, 943 residues long: TBC1 domain family member 2B (943 aa).

Residues 1 to 29 form a disordered region; it reads MPGVEDPCDSQGTPPEEPSTSVAPGEAAK. Over residues 10 to 22 the composition is skewed to polar residues; the sequence is SQGTPPEEPSTSV. One can recognise a PH domain in the interval 32 to 129; sequence SPRLCGYLAK…WLQELQQKRW (98 aa). Positions 315 to 514 form a coiled coil; the sequence is RMESDVLLKL…ARYSNLEAKM (200 aa). Positions 642 to 836 constitute a Rab-GAP TBC domain; that stretch reads GIPHEHRSRM…RIWDSLLYEG (195 aa).

The protein resides in the early endosome. GTPase-activating protein that plays a role in the early steps of endocytosis. The chain is TBC1 domain family member 2B (tbc1d2b) from Xenopus tropicalis (Western clawed frog).